Consider the following 391-residue polypeptide: MCSQLWFLTDRRIREDYPQVQILRALRQRCSEQDVRFRAVLMDQIAVTIVGGHLGLQLNQKALTTFPDVVLVRVPTPSVQSDSDITVLRHLEKLGCRLVNRPQSILNCINKFWTFQELAGHGVPMPDTFSYGGHEDFSKMIDEAEPLGYPVVVKSTRGHRGKAVFLARDKHHLSDICHLIRHDVPYLFQKYVKESHGKDIRVVVVGGQVIGSMLRCSTDGRMQSNCSLGGVGVKCPLTEQGKQLAIQVSNILGMDFCGIDLLIMDDGSFVVCEANANVGFLAFDQACNLDVGGIIADYTMSLLPNRQTGKMAVLPGLSSPREKNEPDGCASAQGVAESVYTINSGSTSSESEPELGEIRDSSASTMGAPPSMLPEPGYNINNRIASELKLK.

Residues 115–300 (FQELAGHGVP…VGGIIADYTM (186 aa)) form the ATP-grasp domain. Residues lysine 154, 189 to 199 (QKYVKESHGKD), and arginine 215 contribute to the ATP site. Residues aspartate 260, glutamate 273, and asparagine 275 each coordinate Mg(2+). Mn(2+) is bound by residues aspartate 260, glutamate 273, and asparagine 275. Position 319 is a phosphoserine (serine 319). Residues 341–350 (TINSGSTSSE) show a composition bias toward polar residues. A disordered region spans residues 341-379 (TINSGSTSSESEPELGEIRDSSASTMGAPPSMLPEPGYN).

Belongs to the RimK family. The cofactor is Mg(2+). It depends on Mn(2+) as a cofactor.

The protein localises to the cytoplasm. The catalysed reaction is N-acetyl-L-aspartate + L-glutamate + ATP = N-acetyl-L-aspartyl-L-glutamate + ADP + phosphate + H(+). The enzyme catalyses N-acetyl-L-aspartate + 2 L-glutamate + 2 ATP = N-acetyl-L-aspartyl-L-glutamyl-L-glutamate + 2 ADP + 2 phosphate + 2 H(+). In terms of biological role, catalyzes the synthesis of N-acetyl-L-aspartyl-L-glutamate (NAAG) and N-acetyl-L-aspartyl-L-glutamyl-L-glutamate. In Homo sapiens (Human), this protein is N-acetylaspartylglutamate synthase A (RIMKLA).